The primary structure comprises 468 residues: Glutamate--tRNA ligase 2 (468 aa).

The 'HIGH' region signature appears at 9-19 (PSPTGFLHIGG). Residues 238-242 (KLSKR) carry the 'KMSKS' region motif. An ATP-binding site is contributed by Lys-241.

Belongs to the class-I aminoacyl-tRNA synthetase family. Glutamate--tRNA ligase type 1 subfamily. In terms of assembly, monomer.

The protein resides in the cytoplasm. The enzyme catalyses tRNA(Glu) + L-glutamate + ATP = L-glutamyl-tRNA(Glu) + AMP + diphosphate. Catalyzes the attachment of glutamate to tRNA(Glu) in a two-step reaction: glutamate is first activated by ATP to form Glu-AMP and then transferred to the acceptor end of tRNA(Glu). In Rhodospirillum centenum (strain ATCC 51521 / SW), this protein is Glutamate--tRNA ligase 2.